We begin with the raw amino-acid sequence, 1073 residues long: Probable cellulose synthase A catalytic subunit 2 [UDP-forming] (1073 aa).

Topologically, residues 1 to 270 (MDGAKSGKQC…SSSRINPYRM (270 aa)) are cytoplasmic. Positions 13, 16, 32, 35, 40, 43, 55, and 58 each coordinate Zn(2+). An RING-type; degenerate zinc finger spans residues 13–59 (CQICGDGVGTAADGELFTACDVCGFPVCRPCYEYERKDGSQACPQCK). Residues 66-98 (KGSPPILGDESDDVDADDASDVNYPTSGNQDHK) are disordered. Residues 74 to 85 (DESDDVDADDAS) are compositionally biased toward acidic residues. A helical membrane pass occupies residues 271–291 (VIVLRLIVLCIFLHYRITNPV). Residues 292 to 293 (RN) are Extracellular-facing. A helical transmembrane segment spans residues 294–314 (AYPLWLLSVICEIWFALSWIL). Residues 315-856 (DQFPKWSPIN…INTTIYPLTS (542 aa)) lie on the Cytoplasmic side of the membrane. UDP-alpha-D-glucose is bound by residues serine 353, lysine 359, glutamate 360, and aspartate 389. Residue aspartate 389 is part of the active site. Residues 443–470 (VKDRRAMKREYEEFKVRVNALVAKAQKV) are a coiled coil. Lysine 530 provides a ligand contact to UDP-alpha-D-glucose. Mn(2+) contacts are provided by lysine 531 and aspartate 555. The interval 655–676 (GGRKKTKKSKEKSTEKKKSHKH) is disordered. Residue aspartate 773 is part of the active site. The helical transmembrane segment at 857–877 (IPLLLYCILPAICLLTGKFII) threads the bilayer. The Extracellular portion of the chain corresponds to 878 to 882 (PEISN). A helical transmembrane segment spans residues 883–903 (FASIWFISLFLSIFATGILEM). Over 904-918 (RWSGVGIDEWWRNEQ) the chain is Cytoplasmic. Residues 919–939 (FWVIGGISAHLFAVFQGLLKV) traverse the membrane as a helical segment. Residues 940–969 (LAGIDTSFTVTSKASDEEGDFAELYMFKWT) lie on the Extracellular side of the membrane. Residues 970-990 (TLLIPPTTILIINLVGVVAGI) form a helical membrane-spanning segment. Residues 991-1001 (SYAINSGYQSW) are Cytoplasmic-facing. A helical membrane pass occupies residues 1002 to 1022 (GPLFGKLFFAFWVIVHLYPFL). The Extracellular portion of the chain corresponds to 1023-1031 (KGLMGRQNR). A helical membrane pass occupies residues 1032 to 1052 (TPTIVVVWAILLASIFSLLWV). The Cytoplasmic segment spans residues 1053–1073 (RIDPFTTRVTGPDTQKCGINC).

It belongs to the glycosyltransferase 2 family. Plant cellulose synthase subfamily. The cofactor is Mn(2+). Zn(2+) is required as a cofactor.

The protein localises to the cell membrane. It catalyses the reaction [(1-&gt;4)-beta-D-glucosyl](n) + UDP-alpha-D-glucose = [(1-&gt;4)-beta-D-glucosyl](n+1) + UDP + H(+). It participates in glycan metabolism; plant cellulose biosynthesis. Its function is as follows. Probable catalytic subunit of cellulose synthase terminal complexes ('rosettes'), required for beta-1,4-glucan microfibril crystallization, a major mechanism of the cell wall formation. This Oryza sativa subsp. japonica (Rice) protein is Probable cellulose synthase A catalytic subunit 2 [UDP-forming] (CESA2).